Reading from the N-terminus, the 132-residue chain is MYSTIFNIGQINKYSKLAIFMSILFLCGCSSQTHSSQKETTIPVTLHVEDAKGLPVEGVQVTIVKAPSSDEEPSTEIGEILGKTDKNGDIKWDTGRKGDYSVALTKGETSVTHHISLTEDKKDHAIPLVFKE.

This is an uncharacterized protein from Bacillus subtilis (strain 168).